Reading from the N-terminus, the 118-residue chain is Ribosome-binding factor A (118 aa).

This sequence belongs to the RbfA family. Monomer. Binds 30S ribosomal subunits, but not 50S ribosomal subunits or 70S ribosomes.

Its subcellular location is the cytoplasm. Its function is as follows. One of several proteins that assist in the late maturation steps of the functional core of the 30S ribosomal subunit. Associates with free 30S ribosomal subunits (but not with 30S subunits that are part of 70S ribosomes or polysomes). Required for efficient processing of 16S rRNA. May interact with the 5'-terminal helix region of 16S rRNA. This is Ribosome-binding factor A from Latilactobacillus sakei subsp. sakei (strain 23K) (Lactobacillus sakei subsp. sakei).